Here is a 218-residue protein sequence, read N- to C-terminus: Cytidylate kinase (218 aa).

7–15 (GPSASGKSS) lines the ATP pocket.

It belongs to the cytidylate kinase family. Type 1 subfamily.

Its subcellular location is the cytoplasm. The catalysed reaction is CMP + ATP = CDP + ADP. It carries out the reaction dCMP + ATP = dCDP + ADP. This is Cytidylate kinase from Borrelia hermsii (strain HS1 / DAH).